Here is a 266-residue protein sequence, read N- to C-terminus: Chymotrypsin-like elastase family member 1 (266 aa).

The N-terminal stretch at 1 to 16 (MLRFLVFATLVLYGHS) is a signal peptide. A propeptide spans 17 to 26 (TQDFPETNAR) (activation peptide). In terms of domain architecture, Peptidase S1 spans 27 to 264 (VVGGTEAGRN…YISWINKTIA (238 aa)). A disulfide bridge connects residues Cys-56 and Cys-72. His-71 functions as the Charge relay system in the catalytic mechanism. Residues Asp-85, Asn-87, Gln-90, and Glu-95 each contribute to the Ca(2+) site. Asn-87 is a glycosylation site (N-linked (GlcNAc...) asparagine). Asp-119 functions as the Charge relay system in the catalytic mechanism. 3 cysteine pairs are disulfide-bonded: Cys-153-Cys-220, Cys-184-Cys-200, and Cys-210-Cys-240. The active-site Charge relay system is the Ser-214. Asn-241 and Asn-260 each carry an N-linked (GlcNAc...) asparagine glycan.

This sequence belongs to the peptidase S1 family. Elastase subfamily. Requires Ca(2+) as cofactor.

The protein localises to the secreted. The catalysed reaction is Hydrolysis of proteins, including elastin. Preferential cleavage: Ala-|-Xaa.. In terms of biological role, serine proteases that hydrolyze many proteins in addition to elastin. This chain is Chymotrypsin-like elastase family member 1 (CELA1), found in Macaca fascicularis (Crab-eating macaque).